We begin with the raw amino-acid sequence, 147 residues long: 3-dehydroquinate dehydratase (147 aa).

The Proton acceptor role is filled by Tyr-23. The substrate site is built by Asn-74, His-80, and Asp-87. The active-site Proton donor is His-100. Substrate-binding positions include 101–102 and Arg-111; that span reads LS.

The protein belongs to the type-II 3-dehydroquinase family. In terms of assembly, homododecamer.

It catalyses the reaction 3-dehydroquinate = 3-dehydroshikimate + H2O. The protein operates within metabolic intermediate biosynthesis; chorismate biosynthesis; chorismate from D-erythrose 4-phosphate and phosphoenolpyruvate: step 3/7. In terms of biological role, catalyzes a trans-dehydration via an enolate intermediate. The sequence is that of 3-dehydroquinate dehydratase from Clostridium botulinum (strain 657 / Type Ba4).